Consider the following 267-residue polypeptide: Hydroxypyruvate/pyruvate aldolase Bphyt_5830 (267 aa).

Residue histidine 48 is the Proton acceptor of the active site. Positions 152 and 178 each coordinate a divalent metal cation.

The protein belongs to the HpcH/HpaI aldolase family. A divalent metal cation is required as a cofactor.

The enzyme catalyses D-glyceraldehyde + 3-hydroxypyruvate = 2-dehydro-D-galactonate. It carries out the reaction D-glyceraldehyde + 3-hydroxypyruvate = (3R,4S,5R)-3,4,5,6-tetrahydroxy-2-oxohexanoate. It catalyses the reaction D-glyceraldehyde + pyruvate = 2-dehydro-3-deoxy-L-galactonate. Aldolase which can catalyze in vitro the aldolisation reaction between hydroxypyruvate (HPA) or pyruvate (PA) and D-glyceraldehyde (D-GA). The condensation of hydroxypyruvate and D-glyceraldehyde produces 2-dehydro-D-galactonate as the major product and (3R,4S,5R)-3,4,5,6-tetrahydroxy-2-oxohexanoate. The condensation of pyruvate and D-glyceraldehyde produces 2-dehydro-3-deoxy-L-galactonate. The sequence is that of Hydroxypyruvate/pyruvate aldolase Bphyt_5830 from Paraburkholderia phytofirmans (strain DSM 17436 / LMG 22146 / PsJN) (Burkholderia phytofirmans).